Here is a 94-residue protein sequence, read N- to C-terminus: Sulfocarbamoylase-1 (94 aa).

Homodimer. Ubiquitous (at protein level). Highest levels of expression in crystalline style followed by digestive gland and mantle.

Strongly inhibited by the serine proteinase inhibitor AEBSF. Weakly inhibited by the proteinase inhibitors BSF and aprotinin, and by EDTA. Not inhibited by the proteinase inhibitors bestatin, E-64 and leupeptin. Hydrolysis of sulfocarbamoyl esters of paralytic shellfish toxins. Does not hydrolyze the carbamoyl esters of paralytic shellfish toxins. Ester hydrolysis is significantly affected by the stereochemistry of sulfate esters at C-11 of the substrate toxin. In Megangulus venulosus (Japanese bivalve), this protein is Sulfocarbamoylase-1.